We begin with the raw amino-acid sequence, 837 residues long: Tuftelin-interacting protein 11 (837 aa).

Positions 1-13 (MSLSHLYRDGEGH) are enriched in basic and acidic residues. 3 disordered regions span residues 1 to 31 (MSLSHLYRDGEGHMDDDDDERENFEITDWDL), 54 to 73 (WAERDSDEERPSFGGKRARD), and 85 to 133 (LKKG…KGFA). Residues 1–50 (MSLSHLYRDGEGHMDDDDDERENFEITDWDLQNEFNPNRQRHWQTKEEAT) are required for interaction with DHX15. Phosphoserine is present on S2. The span at 14–28 (MDDDDDERENFEITD) shows a compositional bias: acidic residues. The segment covering 54–64 (WAERDSDEERP) has biased composition (basic and acidic residues). A phosphoserine mark is found at S59 and S98. Positions 91–102 (EEAELEDSEDEE) are enriched in acidic residues. Over residues 103–116 (KPVKQDDFPKDFGP) the composition is skewed to basic and acidic residues. The residue at position 144 (S144) is a Phosphoserine. In terms of domain architecture, G-patch spans 149 to 195 (TKGIGQKLLQKMGYVPGRGLGKNAQGIINPIEAKQRKGKGAVGAYGS). Disordered regions lie at residues 183-236 (QRKG…KKKP) and 289-312 (HNVPDDGLPLPSQQPPQPGKEAKA). S210 carries the post-translational modification Phosphoserine. Basic and acidic residues predominate over residues 217–231 (EFQKELSQWRKDPSG). The Nuclear localization signal signature appears at 700 to 705 (VKDKFN). The tract at residues 710-734 (IMNRAVSSNVGAYMQPGARENIAYL) is required for nuclear speckle localization.

Belongs to the TFP11/STIP family. In terms of assembly, identified in the spliceosome C complex. Found in the Intron Large (IL) complex, a post-mRNA release spliceosomal complex containing the excised intron, U2, U5 and U6 snRNPs, and splicing factors. Interacts with TUFT1. Interacts with DHX15; indicative for a recruitment of DHX15 to the IL complex. Interacts with GCFC2.

The protein resides in the cytoplasm. It localises to the nucleus. Involved in pre-mRNA splicing, specifically in spliceosome disassembly during late-stage splicing events. Intron turnover seems to proceed through reactions in two lariat-intron associated complexes termed Intron Large (IL) and Intron Small (IS). In cooperation with DHX15 seems to mediate the transition of the U2, U5 and U6 snRNP-containing IL complex to the snRNP-free IS complex leading to efficient debranching and turnover of excised introns. May play a role in the differentiation of ameloblasts and odontoblasts or in the forming of the enamel extracellular matrix. The polypeptide is Tuftelin-interacting protein 11 (TFIP11) (Canis lupus familiaris (Dog)).